A 504-amino-acid polypeptide reads, in one-letter code: Dimethylsulfoniopropionate lyase 5 (504 aa).

It belongs to the aspartate/glutamate racemases family. ALMA1 subfamily. In terms of assembly, homotetramer.

It catalyses the reaction S,S-dimethyl-beta-propiothetin = acrylate + dimethyl sulfide + H(+). In terms of biological role, mediates cleavage of dimethylsulfoniopropionate (DMSP) into dimethyl sulfide (DMS) and acrylate. DMS is the principal form by which sulfur is transported from oceans to the atmosphere and is a key component of the ocean sulfur cycle. This is Dimethylsulfoniopropionate lyase 5 from Emiliania huxleyi (strain CCMP1516).